The primary structure comprises 116 residues: Prefoldin subunit beta (116 aa).

It belongs to the prefoldin subunit beta family. Heterohexamer of two alpha and four beta subunits.

It is found in the cytoplasm. Functionally, molecular chaperone capable of stabilizing a range of proteins. Seems to fulfill an ATP-independent, HSP70-like function in archaeal de novo protein folding. This Methanobrevibacter smithii (strain ATCC 35061 / DSM 861 / OCM 144 / PS) protein is Prefoldin subunit beta.